Here is a 129-residue protein sequence, read N- to C-terminus: Fluoride-specific ion channel FluC 2 (129 aa).

4 helical membrane-spanning segments follow: residues 9 to 29, 37 to 57, 74 to 94, and 100 to 120; these read LGTL…RYLL, GTIL…YYVI, MVGA…LSTF, and YLLI…ILGI. Residues G76 and T79 each coordinate Na(+).

It belongs to the fluoride channel Fluc/FEX (TC 1.A.43) family.

Its subcellular location is the cell membrane. The catalysed reaction is fluoride(in) = fluoride(out). Na(+) is not transported, but it plays an essential structural role and its presence is essential for fluoride channel function. Functionally, fluoride-specific ion channel. Important for reducing fluoride concentration in the cell, thus reducing its toxicity. The sequence is that of Fluoride-specific ion channel FluC 2 from Ligilactobacillus salivarius (strain UCC118) (Lactobacillus salivarius).